We begin with the raw amino-acid sequence, 444 residues long: ATP-dependent protease ATPase subunit HslU (444 aa).

ATP contacts are provided by residues Ile-18, 60-65 (GVGKTE), Asp-256, Glu-322, and Arg-394.

The protein belongs to the ClpX chaperone family. HslU subfamily. As to quaternary structure, a double ring-shaped homohexamer of HslV is capped on each side by a ring-shaped HslU homohexamer. The assembly of the HslU/HslV complex is dependent on binding of ATP.

The protein resides in the cytoplasm. Functionally, ATPase subunit of a proteasome-like degradation complex; this subunit has chaperone activity. The binding of ATP and its subsequent hydrolysis by HslU are essential for unfolding of protein substrates subsequently hydrolyzed by HslV. HslU recognizes the N-terminal part of its protein substrates and unfolds these before they are guided to HslV for hydrolysis. The polypeptide is ATP-dependent protease ATPase subunit HslU (Buchnera aphidicola subsp. Cinara cedri (strain Cc)).